We begin with the raw amino-acid sequence, 422 residues long: Solute carrier family 35 member D3 (422 aa).

10 consecutive transmembrane segments (helical) span residues 9-29 (VLGI…NILL), 38-58 (FSFL…SLEL), 64-84 (LIAV…VAVL), 103-123 (MYVV…VLVL), 131-151 (GVLA…AGDL), 155-175 (PIGY…LVLI), 187-207 (LTAQ…CSFA), 224-244 (AMVS…FTTL), 257-277 (FVGV…FSDV), and 280-300 (TSLF…YCVA). The segment at 339–365 (AKSGNSEPESAEGAGDSVQQGGQESRG) is disordered. Residues 355–364 (SVQQGGQESR) show a composition bias toward polar residues.

The protein belongs to the TPT transporter family. SLC35D subfamily. Could interact with ATG14, BECN1 and PIK3C3 that form the PI3KC3-C1/AIC/autophagy initiation complex; enhancing the formation of the AIC and promoting autophagy. As to expression, expressed in brain. Expressed in subsets of dopaminergic neurons. Expressed in maturing megakaryocytes.

The protein resides in the cytoplasmic vesicle. The protein localises to the secretory vesicle. Its subcellular location is the synaptic vesicle membrane. It is found in the early endosome membrane. It localises to the endoplasmic reticulum membrane. It carries out the reaction UDP-alpha-D-glucose(in) = UDP-alpha-D-glucose(out). Inhibited by proton uncouplers that directly abolish the proton electrochemical gradient. Its function is as follows. Probable UDP-glucose transmembrane transporter involved in UDP-glucose transport from the cytosol to the lumen of synaptic vesicles. It is involved in platelet dense granules maturation. Functionally, alternatively, could function as a molecular adapter enhancing the formation of the PI3KC3-C1/AIC/autophagy initiation complex to promote autophagy in dopaminergic neurons. Could also regulate the plasma membrane localization of the D(1A) dopamine receptor/DRD1 and dopamine signaling. The protein is Solute carrier family 35 member D3 of Mus musculus (Mouse).